The following is a 362-amino-acid chain: Ribosome-binding ATPase YchF (362 aa).

The 253-residue stretch at 3-255 folds into the OBG-type G domain; that stretch reads FKCGIIGLPN…MNEDEQKYFM (253 aa). 12 to 17 lines the ATP pocket; the sequence is NVGKST. Mg(2+) is bound by residues Ser-16 and Thr-36. One can recognise a TGS domain in the interval 277-360; the sequence is NLITFFTAGI…QDGDIINFLF (84 aa).

Belongs to the TRAFAC class OBG-HflX-like GTPase superfamily. OBG GTPase family. YchF/OLA1 subfamily. Requires Mg(2+) as cofactor.

Functionally, ATPase that binds to both the 70S ribosome and the 50S ribosomal subunit in a nucleotide-independent manner. In Buchnera aphidicola subsp. Schizaphis graminum (strain Sg), this protein is Ribosome-binding ATPase YchF.